We begin with the raw amino-acid sequence, 550 residues long: Glucose-6-phosphate isomerase (550 aa).

The active-site Proton donor is the Glu356. Active-site residues include His387 and Lys515.

The protein belongs to the GPI family.

It localises to the cytoplasm. The enzyme catalyses alpha-D-glucose 6-phosphate = beta-D-fructose 6-phosphate. Its pathway is carbohydrate biosynthesis; gluconeogenesis. It participates in carbohydrate degradation; glycolysis; D-glyceraldehyde 3-phosphate and glycerone phosphate from D-glucose: step 2/4. Functionally, catalyzes the reversible isomerization of glucose-6-phosphate to fructose-6-phosphate. In Vibrio vulnificus (strain YJ016), this protein is Glucose-6-phosphate isomerase.